The primary structure comprises 361 residues: Peptide chain release factor 1 (361 aa).

Gln236 carries the N5-methylglutamine modification. The span at Asn285–Arg309 shows a compositional bias: basic and acidic residues. Residues Asn285–Asn312 form a disordered region.

It belongs to the prokaryotic/mitochondrial release factor family. Post-translationally, methylated by PrmC. Methylation increases the termination efficiency of RF1.

It localises to the cytoplasm. Peptide chain release factor 1 directs the termination of translation in response to the peptide chain termination codons UAG and UAA. The protein is Peptide chain release factor 1 of Methylobacterium radiotolerans (strain ATCC 27329 / DSM 1819 / JCM 2831 / NBRC 15690 / NCIMB 10815 / 0-1).